Here is a 250-residue protein sequence, read N- to C-terminus: tRNA (guanine-N(7)-)-methyltransferase (250 aa).

S-adenosyl-L-methionine is bound by residues E79, E104, D131, and D154. D154 is a catalytic residue. Residues K158, D190, and 228–231 (TKFE) contribute to the substrate site.

Belongs to the class I-like SAM-binding methyltransferase superfamily. TrmB family.

The catalysed reaction is guanosine(46) in tRNA + S-adenosyl-L-methionine = N(7)-methylguanosine(46) in tRNA + S-adenosyl-L-homocysteine. It functions in the pathway tRNA modification; N(7)-methylguanine-tRNA biosynthesis. Functionally, catalyzes the formation of N(7)-methylguanine at position 46 (m7G46) in tRNA. The polypeptide is tRNA (guanine-N(7)-)-methyltransferase (Actinobacillus pleuropneumoniae serotype 5b (strain L20)).